The sequence spans 303 residues: 34 kDa antigenic protein homolog (303 aa).

Transmembrane regions (helical) follow at residues 42-62 (IAVAVLGLAAYFASFGPMFTL), 77-97 (TGLPVGVALLAALLAGVALVP), 102-122 (HVTVVAVLGVLGVFLMVSATF), and 134-154 (LWVVLAFIVFQAVAAVLALLV). Low complexity-rich tracts occupy residues 194-207 (QGAQQAAGLQSPGP) and 215-255 (GYGS…HQGP). Residues 194–303 (QGAQQAAGLQ…QSSSPGGAPV (110 aa)) form a disordered region. Residues 256–271 (STPPTGFPSFSPPPPV) are compositionally biased toward pro residues. Residues 274 to 286 (GTGSQAGSAPVNY) show a composition bias toward polar residues. Positions 287–303 (SNPSGGEQSSSPGGAPV) are enriched in low complexity.

To M.paratuberculosis 34 kDa antigenic protein.

It localises to the cell membrane. The polypeptide is 34 kDa antigenic protein homolog (Mycobacterium bovis (strain ATCC BAA-935 / AF2122/97)).